The sequence spans 332 residues: Ribosomal RNA small subunit methyltransferase H (332 aa).

S-adenosyl-L-methionine is bound by residues 36–38 (GGY), D54, F81, D102, and Q109. The tract at residues 297–318 (ARSAKLRGAERTEAPAHAAGDL) is disordered.

This sequence belongs to the methyltransferase superfamily. RsmH family.

Its subcellular location is the cytoplasm. It catalyses the reaction cytidine(1402) in 16S rRNA + S-adenosyl-L-methionine = N(4)-methylcytidine(1402) in 16S rRNA + S-adenosyl-L-homocysteine + H(+). Specifically methylates the N4 position of cytidine in position 1402 (C1402) of 16S rRNA. This Rhodopseudomonas palustris (strain TIE-1) protein is Ribosomal RNA small subunit methyltransferase H.